A 533-amino-acid chain; its full sequence is Zinc finger protein 26 (533 aa).

In terms of domain architecture, KRAB spans 14–85; the sequence is LSFKDISMEF…NAKISRQSCP (72 aa). C2H2-type zinc fingers lie at residues 174–196, 202–224, 230–252, 258–280, 286–308, 314–336, 342–364, 370–392, 398–420, 426–448, 454–476, 482–504, and 510–532; these read CVCSECGKAFRCKSQLIVHLRIH, YECSKCERAFSAKSNLNAHQRVH, YSCSECEKVFSFRSQLIVHQEIH, YGCSECGKAYSWKSQLLLHQRSH, YECSECGKAFSLKSPFVVHQRTH, HKCSECGKAFRSKSYLLVHIRMH, YQCSDCGKAFNMKTQLIVHQGVH, YQCGECGKAFGRKEQLTAHLRAH, YGCSECGKAFSSKSYLVIHRRTH, YECSLCERAFCGKSQLIIHQRTH, YECNECEKAYPRKASLQIHQKTH, FKCSECGKAFTQKSSLSEHQRVH, and WKCSECGKSFCWNSGLRIHRKTH.

The protein belongs to the krueppel C2H2-type zinc-finger protein family.

It is found in the nucleus. Its function is as follows. May be involved in transcriptional regulation. This chain is Zinc finger protein 26 (ZNF26), found in Homo sapiens (Human).